Reading from the N-terminus, the 279-residue chain is Bis(5'-nucleosyl)-tetraphosphatase, symmetrical (279 aa).

Belongs to the Ap4A hydrolase family.

The catalysed reaction is P(1),P(4)-bis(5'-adenosyl) tetraphosphate + H2O = 2 ADP + 2 H(+). Hydrolyzes diadenosine 5',5'''-P1,P4-tetraphosphate to yield ADP. The chain is Bis(5'-nucleosyl)-tetraphosphatase, symmetrical from Edwardsiella ictaluri (strain 93-146).